The sequence spans 136 residues: Phosphoribosyl-AMP cyclohydrolase (136 aa).

Mg(2+) is bound at residue Asp92. Cys93 lines the Zn(2+) pocket. Residues Asp94 and Asp96 each contribute to the Mg(2+) site. Zn(2+) is bound by residues Cys109 and Cys116.

The protein belongs to the PRA-CH family. As to quaternary structure, homodimer. It depends on Mg(2+) as a cofactor. Zn(2+) is required as a cofactor.

Its subcellular location is the cytoplasm. The catalysed reaction is 1-(5-phospho-beta-D-ribosyl)-5'-AMP + H2O = 1-(5-phospho-beta-D-ribosyl)-5-[(5-phospho-beta-D-ribosylamino)methylideneamino]imidazole-4-carboxamide. Its pathway is amino-acid biosynthesis; L-histidine biosynthesis; L-histidine from 5-phospho-alpha-D-ribose 1-diphosphate: step 3/9. Its activity is regulated as follows. Reversibly inhibited by EDTA and free zinc ions. Enzyme is inactivated by dialysis against 1,10-phenanthroline, which is a zinc specific chelator. In terms of biological role, catalyzes the hydrolysis of the adenine ring of phosphoribosyl-AMP. This Methanococcus vannielii protein is Phosphoribosyl-AMP cyclohydrolase.